The chain runs to 282 residues: Sulfur carrier protein FdhD (282 aa).

Cys115 acts as the Cysteine persulfide intermediate in catalysis.

This sequence belongs to the FdhD family.

It is found in the cytoplasm. Required for formate dehydrogenase (FDH) activity. Acts as a sulfur carrier protein that transfers sulfur from IscS to the molybdenum cofactor prior to its insertion into FDH. The protein is Sulfur carrier protein FdhD of Streptomyces avermitilis (strain ATCC 31267 / DSM 46492 / JCM 5070 / NBRC 14893 / NCIMB 12804 / NRRL 8165 / MA-4680).